A 353-amino-acid polypeptide reads, in one-letter code: MNGTEGPFFYVPMVNTTGIVRSPYEYPQYYLVNPAAYAALGAYMFLLILVGFPINFLTLYVTIEHKKLRTPLNYILLNLAVADLFMVLGGFTTTMYTSMHGYFVLGRLGCNIEGFFATLGGEIALWSLVVLAIERWVVVCKPISNFRFGENHAIMGLAFTWTMAMACAAPPLVGWSRYIPEGMQCSCGIDYYTRAEGFNNESFVIYMFICHFTIPLTVVFFCYGRLLCAVKEAAAAQQESETTQRAEKEVTRMVIMMVIAFLVCWLPYASVAWYIFTHQGSEFGPVFMTIPAFFAKSSSIYNPMIYICLNKQFRHCMITTLCCGKNPFEEEEGASTASKTEASSVSSSSVSPA.

The Extracellular segment spans residues 1 to 36; the sequence is MNGTEGPFFYVPMVNTTGIVRSPYEYPQYYLVNPAA. N-linked (GlcNAc...) asparagine glycans are attached at residues N2 and N15. A helical membrane pass occupies residues 37–61; sequence YAALGAYMFLLILVGFPINFLTLYV. Residues 62-73 are Cytoplasmic-facing; sequence TIEHKKLRTPLN. Residues 74-96 form a helical membrane-spanning segment; it reads YILLNLAVADLFMVLGGFTTTMY. Residues 97–110 lie on the Extracellular side of the membrane; that stretch reads TSMHGYFVLGRLGC. A disulfide bond links C110 and C187. A helical membrane pass occupies residues 111 to 133; sequence NIEGFFATLGGEIALWSLVVLAI. Residues 134 to 136 carry the 'Ionic lock' involved in activated form stabilization motif; sequence ERW. Residues 134-152 are Cytoplasmic-facing; sequence ERWVVVCKPISNFRFGENH. Residues 153-173 form a helical membrane-spanning segment; that stretch reads AIMGLAFTWTMAMACAAPPLV. At 174-202 the chain is on the extracellular side; the sequence is GWSRYIPEGMQCSCGIDYYTRAEGFNNES. N-linked (GlcNAc...) asparagine glycosylation is present at N200. A helical transmembrane segment spans residues 203–224; sequence FVIYMFICHFTIPLTVVFFCYG. Over 225–252 the chain is Cytoplasmic; sequence RLLCAVKEAAAAQQESETTQRAEKEVTR. Residues 253–274 form a helical membrane-spanning segment; that stretch reads MVIMMVIAFLVCWLPYASVAWY. The Extracellular segment spans residues 275–286; it reads IFTHQGSEFGPV. The chain crosses the membrane as a helical span at residues 287-308; sequence FMTIPAFFAKSSSIYNPMIYIC. K296 carries the post-translational modification N6-(retinylidene)lysine. Residues 309–353 are Cytoplasmic-facing; that stretch reads LNKQFRHCMITTLCCGKNPFEEEEGASTASKTEASSVSSSSVSPA. S-palmitoyl cysteine attachment occurs at residues C322 and C323. The disordered stretch occupies residues 331–353; sequence EEGASTASKTEASSVSSSSVSPA. The span at 334–353 shows a compositional bias: low complexity; the sequence is ASTASKTEASSVSSSSVSPA.

The protein belongs to the G-protein coupled receptor 1 family. Opsin subfamily. In terms of processing, phosphorylated on some or all of the serine and threonine residues present in the C-terminal region. Post-translationally, contains one covalently linked retinal chromophore.

The protein resides in the membrane. Its subcellular location is the cell projection. The protein localises to the cilium. It localises to the photoreceptor outer segment. Functionally, photoreceptor required for image-forming vision at low light intensity. While most salt water fish species use retinal as chromophore, most freshwater fish use 3-dehydroretinal, or a mixture of retinal and 3-dehydroretinal. Light-induced isomerization of 11-cis to all-trans retinal triggers a conformational change that activates signaling via G-proteins. Subsequent receptor phosphorylation mediates displacement of the bound G-protein alpha subunit by arrestin and terminates signaling. This chain is Rhodopsin (rho), found in Diplodus annularis (Annular seabream).